The sequence spans 285 residues: Pantothenate synthetase (285 aa).

M32–H39 serves as a coordination point for ATP. The Proton donor role is filled by H39. A (R)-pantoate-binding site is contributed by Q63. A beta-alanine-binding site is contributed by Q63. Residue G149–D152 coordinates ATP. Q155 contributes to the (R)-pantoate binding site. Residues V178 and M186–R189 each bind ATP.

This sequence belongs to the pantothenate synthetase family. Homodimer.

It localises to the cytoplasm. It carries out the reaction (R)-pantoate + beta-alanine + ATP = (R)-pantothenate + AMP + diphosphate + H(+). Its pathway is cofactor biosynthesis; (R)-pantothenate biosynthesis; (R)-pantothenate from (R)-pantoate and beta-alanine: step 1/1. Functionally, catalyzes the condensation of pantoate with beta-alanine in an ATP-dependent reaction via a pantoyl-adenylate intermediate. In Ruegeria pomeroyi (strain ATCC 700808 / DSM 15171 / DSS-3) (Silicibacter pomeroyi), this protein is Pantothenate synthetase.